Reading from the N-terminus, the 205-residue chain is Protease (205 aa).

Catalysis depends on residues His54, Asp71, and Cys120.

Belongs to the peptidase C5 family. In terms of assembly, interacts with protease cofactor pVI-C; this interaction is necessary for protease activation.

The protein resides in the virion. The protein localises to the host nucleus. It catalyses the reaction Cleaves proteins of the adenovirus and its host cell at two consensus sites: -Yaa-Xaa-Gly-Gly-|-Xaa- and -Yaa-Xaa-Gly-Xaa-|-Gly- (in which Yaa is Met, Ile or Leu, and Xaa is any amino acid).. With respect to regulation, requires DNA and protease cofactor for maximal activation. Inside nascent virions, becomes partially activated by binding to the viral DNA, allowing it to cleave the cofactor that binds to the protease and fully activates it. Actin, like the viral protease cofactor, seems to act as a cofactor in the cleavage of cytokeratin 18 and of actin itself. Its function is as follows. Cleaves viral precursor proteins (pTP, pIIIa, pVI, pVII, pVIII, and pX) inside newly assembled particles giving rise to mature virions. Protease complexed to its cofactor slides along the viral DNA to specifically locate and cleave the viral precursors. Mature virions have a weakened organization compared to the unmature virions, thereby facilitating subsequent uncoating. Without maturation, the particle lacks infectivity and is unable to uncoat. Late in adenovirus infection, in the cytoplasm, may participate in the cytoskeleton destruction. Cleaves host cell cytoskeletal keratins K7 and K18. This Bos taurus (Bovine) protein is Protease.